A 193-amino-acid polypeptide reads, in one-letter code: Inosine triphosphate pyrophosphatase (193 aa).

Position 10 to 15 (10 to 15 (TGNANK)) interacts with ITP. Glu42 is a Mg(2+) binding site. ITP-binding positions include Lys54, 70-71 (DT), Lys87, 146-149 (FGWD), Lys169, and 174-175 (HR).

This sequence belongs to the HAM1 NTPase family. Homodimer. It depends on Mg(2+) as a cofactor. The cofactor is Mn(2+).

It is found in the cytoplasm. The protein resides in the nucleus. The enzyme catalyses ITP + H2O = IMP + diphosphate + H(+). It carries out the reaction dITP + H2O = dIMP + diphosphate + H(+). The catalysed reaction is XTP + H2O = XMP + diphosphate + H(+). Pyrophosphatase that hydrolyzes non-canonical purine nucleotides such as inosine triphosphate (ITP), deoxyinosine triphosphate (dITP) or xanthosine 5'-triphosphate (XTP) to their respective monophosphate derivatives. The enzyme does not distinguish between the deoxy- and ribose forms. Probably excludes non-canonical purines from RNA and DNA precursor pools, thus preventing their incorporation into RNA and DNA and avoiding chromosomal lesions. In Mycosarcoma maydis (Corn smut fungus), this protein is Inosine triphosphate pyrophosphatase.